The primary structure comprises 139 residues: Large ribosomal subunit protein uL16 (139 aa).

The segment covering 1–16 (MLIPKRTKYRKQHRPD) has biased composition (basic residues). Positions 1–23 (MLIPKRTKYRKQHRPDRHGMSKG) are disordered.

Belongs to the universal ribosomal protein uL16 family. In terms of assembly, part of the 50S ribosomal subunit.

Binds 23S rRNA and is also seen to make contacts with the A and possibly P site tRNAs. In Bifidobacterium animalis subsp. lactis (strain AD011), this protein is Large ribosomal subunit protein uL16.